The sequence spans 1139 residues: Phospholipid-transporting ATPase tat-1 (1139 aa).

Helical transmembrane passes span 78–98, 276–296, and 318–338; these read YTTA…EIFE, IIFL…GSEI, and SFLW…PISL. Asp-388 acts as the 4-aspartylphosphate intermediate in catalysis. 6 helical membrane passes run 831-851, 855-875, 901-921, 935-955, 972-992, and 1013-1033; these read ICLY…GQTI, WTIG…LGLF, IGNF…LFFL, GLTG…VATV, VACI…SLVF, and YTFW…DLVI.

This sequence belongs to the cation transport ATPase (P-type) (TC 3.A.3) family. Type IV subfamily.

It localises to the cell membrane. The protein resides in the early endosome membrane. The protein localises to the recycling endosome membrane. It carries out the reaction ATP + H2O + phospholipidSide 1 = ADP + phosphate + phospholipidSide 2.. The enzyme catalyses a 1,2-diacyl-sn-glycero-3-phospho-L-serine(out) + ATP + H2O = a 1,2-diacyl-sn-glycero-3-phospho-L-serine(in) + ADP + phosphate + H(+). In terms of biological role, transports phosphatidylserine from the outer to the inner leaflet of the plasma membrane, thereby maintaining the enrichment of this phospholipid in the inner leaflet. Ectopic exposure of phosphatidylserine on the cell surface may result in removal of living cells by neighboring phagocytes. Regulation of the phosphatidylserine distribution in plasma membranes is likely to help in the maintenance and control of the membrane surface charge. Plays a role in the formation of the tubular membrane structure and in membrane trafficking and is specifically involved in the recycling and degradation of endocytic cargo, likely with its chaperone protein chat-1. The protein is Phospholipid-transporting ATPase tat-1 (tat-1) of Caenorhabditis elegans.